The sequence spans 136 residues: Histone H3 (136 aa).

The interval 1-43 is disordered; that stretch reads MARTKQTARKSTGGKAPRKQLATKAARKSAPASGGVKKPHRFR. Lysine 5 is subject to N6-methylated lysine. N6-acetyllysine; alternate is present on lysine 10. Lysine 10 bears the N6-methylated lysine; alternate mark. Serine 11 is modified (phosphoserine). Position 12 is a phosphothreonine (threonine 12). Residue lysine 15 is modified to N6-acetyllysine. Lysine 19 and lysine 24 each carry N6-acetyllysine; alternate. 2 positions are modified to N6-methylated lysine; alternate: lysine 19 and lysine 24. Residue lysine 28 is modified to N6-methylated lysine. The residue at position 29 (serine 29) is a Phosphoserine. The residue at position 37 (lysine 37) is an N6-methylated lysine.

This sequence belongs to the histone H3 family. As to quaternary structure, the nucleosome is a histone octamer containing two molecules each of H2A, H2B, H3 and H4 assembled in one H3-H4 heterotetramer and two H2A-H2B heterodimers. The octamer wraps approximately 147 bp of DNA. Acetylation is generally linked to gene activation. Can be acetylated to form H3K9ac, H3K14ac, H3K18ac and H3K23ac. H3K9ac could compete with H3K9me and prevent gene silencing. H3K9ac is restricted to euchromatin. Post-translationally, methylated to form mainly H3K4me, H3K9me, H3K18me, H3K23me, H3K27me and H3K36me. H3K4me1/2/3, H3K9me3, H3K27me3 and H3K36me1/2/3 are typical marks for euchromatin, whereas heterochromatic chromocenters are enriched in H3K9me1/2 and H3K27me1/2. H2BK143ub1 is probably prerequisite for H3K4me. In terms of processing, can be phosphorylated to form H3S10ph, H3T11ph and H3S28ph.

Its subcellular location is the nucleus. It localises to the chromosome. Functionally, core component of nucleosome. Nucleosomes wrap and compact DNA into chromatin, limiting DNA accessibility to the cellular machineries which require DNA as a template. Histones thereby play a central role in transcription regulation, DNA repair, DNA replication and chromosomal stability. DNA accessibility is regulated via a complex set of post-translational modifications of histones, also called histone code, and nucleosome remodeling. The sequence is that of Histone H3 from Griffithsia japonica (Red alga).